Reading from the N-terminus, the 706-residue chain is D-(-)-3-hydroxybutyrate oligomer hydrolase (706 aa).

An N-terminal signal peptide occupies residues 1–27 (MTIIIAGKNTLTLTSLAAAVLALGACG). The Charge relay system role is filled by serine 311.

It belongs to the D-(-)-3-hydroxybutyrate oligomer hydrolase family.

Its subcellular location is the secreted. It carries out the reaction (3R)-hydroxybutanoate dimer + H2O = 2 (R)-3-hydroxybutanoate + H(+). Its pathway is lipid metabolism; butanoate metabolism. Functionally, participates in the degradation of poly-3-hydroxybutyrate (PHB). It works downstream of poly(3-hydroxybutyrate) depolymerase, hydrolyzing D(-)-3-hydroxybutyrate oligomers of various length (3HB-oligomers) into 3HB-monomers. This chain is D-(-)-3-hydroxybutyrate oligomer hydrolase, found in Polaromonas naphthalenivorans (strain CJ2).